Here is a 224-residue protein sequence, read N- to C-terminus: Thymidine kinase (224 aa).

ATP-binding positions include 19–26 (GPMFAGKT) and 93–96 (DEVQ). Glutamate 94 functions as the Proton acceptor in the catalytic mechanism. Residues cysteine 150, cysteine 153, cysteine 188, and histidine 191 each contribute to the Zn(2+) site.

This sequence belongs to the thymidine kinase family. Homotetramer.

The protein localises to the cytoplasm. It catalyses the reaction thymidine + ATP = dTMP + ADP + H(+). The sequence is that of Thymidine kinase from Mycoplasmoides gallisepticum (strain R(low / passage 15 / clone 2)) (Mycoplasma gallisepticum).